The chain runs to 624 residues: Ceramide transfer protein (624 aa).

Over residues 1–11 (MSDNQSWNSSG) the composition is skewed to polar residues. Residues 1–24 (MSDNQSWNSSGSEEDPETESGPPV) form a disordered region. Positions 23 to 117 (PVERCGVLSK…WVDAIEQHKT (95 aa)) constitute a PH domain. Phosphoserine occurs at positions 126, 132, and 135. Residues 202-221 (DDEDDFPTTRSDGDFLHNTN) form a disordered region. A coiled-coil region spans residues 263 to 303 (IELMVKREESWQKRHDREVEKRRRVEEAYKNVMEELKKKPR). Ser-315 carries the phosphoserine modification. The FFAT signature appears at 321–327 (EFFDAVE). Tyr-372 bears the Phosphotyrosine mark. 3 positions are modified to phosphoserine: Ser-373, Ser-377, and Ser-380. The START domain occupies 389 to 618 (DVHRFSSQVE…FTSYVQEKTA (230 aa)). Glu-472, Gln-493, Asn-530, and Tyr-579 together coordinate an N-acylsphing-4-enine.

As to quaternary structure, interacts with VAPA and VAPB. Interaction with VAPB is less efficient than with VAPA. Interacts (via FFAT motif) with MOSPD2 (via MSP domain). Phosphorylation on Ser-132 decreases the affinity toward phosphatidylinositol 4-phosphate at Golgi membranes and reduces ceramide transfer activity. Inactivated by hyperphosphorylation of serine residues by CSNK1G2/CK1 that triggers dissociation from the Golgi complex, thus down-regulating ER-to-Golgi transport of ceramide and sphingomyelin synthesis.

It localises to the cytoplasm. The protein resides in the golgi apparatus. Its subcellular location is the endoplasmic reticulum. The enzyme catalyses N-hexadecanoylsphing-4-enine(in) = N-hexadecanoylsphing-4-enine(out). In terms of biological role, shelters ceramides and diacylglycerol lipids inside its START domain and mediates the intracellular trafficking of ceramides and diacylglycerol lipids in a non-vesicular manner. This chain is Ceramide transfer protein (Cert1), found in Mus musculus (Mouse).